Consider the following 102-residue polypeptide: Small ribosomal subunit protein uS10 (102 aa).

This sequence belongs to the universal ribosomal protein uS10 family. As to quaternary structure, part of the 30S ribosomal subunit.

In terms of biological role, involved in the binding of tRNA to the ribosomes. This Levilactobacillus brevis (strain ATCC 367 / BCRC 12310 / CIP 105137 / JCM 1170 / LMG 11437 / NCIMB 947 / NCTC 947) (Lactobacillus brevis) protein is Small ribosomal subunit protein uS10.